A 352-amino-acid chain; its full sequence is Long-chain-alcohol O-fatty-acyltransferase (352 aa).

8 helical membrane-spanning segments follow: residues 13-33 (VWIS…VAPH), 34-54 (GGAL…FLPL), 67-87 (LYLV…LGPL), 128-148 (KVVL…IYEF), 155-175 (FVIS…TLAA), 239-259 (VAGA…VFFF), 267-287 (SWEV…EMVV), and 303-323 (GALT…PQLV).

Belongs to the wax synthase family.

Its subcellular location is the microsome membrane. It catalyses the reaction a long chain fatty alcohol + a fatty acyl-CoA = a wax ester + CoA. Functionally, catalyzes the final step in the synthesis of long-chain linear esters (waxes). Has activity with both saturated and monounsaturated acyl-CoA ranging from 14 to 24 carbons in length, but C20:1 acyl-CoA is the preferred substrate. The chain is Long-chain-alcohol O-fatty-acyltransferase from Simmondsia chinensis (Jojoba).